Consider the following 186-residue polypeptide: Ribosome rescue factor SmrB (186 aa).

The Smr domain occupies 99–174 (IDLHGLTQHQ…SDAAIIVIIE (76 aa)).

The protein belongs to the SmrB family. In terms of assembly, associates with collided ribosomes, but not with correctly translating polysomes.

Acts as a ribosome collision sensor. Detects stalled/collided disomes (pairs of ribosomes where the leading ribosome is stalled and a second ribosome has collided with it) and endonucleolytically cleaves mRNA at the 5' boundary of the stalled ribosome. Stalled/collided disomes form a new interface (primarily via the 30S subunits) that binds SmrB. Cleaved mRNA becomes available for tmRNA ligation, leading to ribosomal subunit dissociation and rescue of stalled ribosomes. The chain is Ribosome rescue factor SmrB from Buchnera aphidicola subsp. Acyrthosiphon pisum (strain Tuc7).